A 149-amino-acid polypeptide reads, in one-letter code: MGDNYWIDPVNLSPQELVETLQRIDQEGYEVIVVTEGGFPMGPFRMAFRIDEEPNMYYISQKDLALEYDPLQFLHWVRQYSGEIINWTHHGRVPWWKIFQMLEAKLEDSYYYETTMFYIPSSISHDCWSLFLQFWREGFGSPPLDVAWS.

This is Protein E4.1 from Snake adenovirus serotype 1 (SnAdV-1).